Consider the following 483-residue polypeptide: Probable Xaa-Pro aminopeptidase MCYG_06503 (483 aa).

Mn(2+) is bound by residues Asp233, Asp244, Glu409, and Glu453.

This sequence belongs to the peptidase M24B family. Mn(2+) is required as a cofactor.

It catalyses the reaction Release of any N-terminal amino acid, including proline, that is linked to proline, even from a dipeptide or tripeptide.. Functionally, catalyzes the removal of a penultimate prolyl residue from the N-termini of peptides. The protein is Probable Xaa-Pro aminopeptidase MCYG_06503 of Arthroderma otae (strain ATCC MYA-4605 / CBS 113480) (Microsporum canis).